A 1388-amino-acid chain; its full sequence is Rho-associated protein kinase 2 (1388 aa).

Residues 1-24 (MSRPPPTGKMPGAPEAVSGDGAGA) are disordered. The 263-residue stretch at 92-354 (YDVVKVIGRG…VEEIKQHPFF (263 aa)) folds into the Protein kinase domain. ATP contacts are provided by residues 98–106 (IGRGAFGEV) and K121. The active-site Proton acceptor is D214. Residues 357 to 425 (DQWNWDNIRE…YRENLLLSDS (69 aa)) form the AGC-kinase C-terminal domain. An interaction with PPP1R12A region spans residues 363 to 784 (NIRETAAPVV…INELLKQKDV (422 aa)). An interaction with NPM1 region spans residues 373 to 420 (PELSSDIDSSNFDDIEDDKGDVETFPIPKAFVGNQLPFIGFTYYRENL). Position 414 is a phosphothreonine; by ROCK2 (T414). 2 coiled-coil regions span residues 439-1025 (NEES…KQLL) and 1053-1131 (DTDV…IGLD). The region spanning 497–573 (TLRQLEREKA…LDETNALLRT (77 aa)) is the REM-1 domain. Residues 512-530 (NAEYQRKADHEADKKRNLE) show a composition bias toward basic and acidic residues. Residues 512-532 (NAEYQRKADHEADKKRNLEND) form a disordered region. Position 722 is a phosphotyrosine; by SRC (Y722). In terms of domain architecture, RhoBD spans 979–1047 (TSDVANLANE…LAEIMNRKEP (69 aa)). The interval 979 to 1047 (TSDVANLANE…LAEIMNRKEP (69 aa)) is RHOA binding. S1137 is modified (phosphoserine). In terms of domain architecture, PH spans 1150–1349 (ESRLEGWLSL…WVSRLVKKIP (200 aa)). T1212 carries the post-translational modification Phosphothreonine. The segment at 1260–1315 (GHEFIPTLYHFPTNCEACMKPLWHMFKPPPALECRRCHIKCHKDHMDKKEEIIAPC) adopts a Phorbol-ester/DAG-type zinc-finger fold. The interval 1345-1388 (VKKIPKKPPAPDPFARSSPRTSMKIQQNQSIRRPSRQLAPNKPS) is disordered. A phosphoserine mark is found at S1362 and S1374. Over residues 1362 to 1376 (SPRTSMKIQQNQSIR) the composition is skewed to polar residues.

It belongs to the protein kinase superfamily. AGC Ser/Thr protein kinase family. In terms of assembly, homodimer. Interacts with IRS1. Interacts with RAF1. Interacts with RHOA (activated by GTP). Interacts with RHOB and RHOC. Interacts with PPP1R12A. Interacts with EP300. Interacts with CHORDC1. Interacts with BRCA2. Interacts with NPM1; this interaction enhances ROCK2 activity. Interacts with SORL1. Interacts with PJVK. Requires Mg(2+) as cofactor. In terms of processing, autophosphorylated. Phosphorylation at Tyr-722 reduces its binding to RHOA and is crucial for focal adhesion dynamics. Dephosphorylation by PTPN11 stimulates its RHOA binding activity. Cleaved by granzyme B during apoptosis. This leads to constitutive activation of the kinase and membrane blebbing. Highly expressed in whole brain and in cerebellum, and at lower levels in heart and lung. Detected at low levels in skeletal muscle, spleen, liver, kidney and pancreas.

Its subcellular location is the cytoplasm. It is found in the cell membrane. It localises to the nucleus. The protein resides in the cytoskeleton. The protein localises to the microtubule organizing center. Its subcellular location is the centrosome. It carries out the reaction L-seryl-[protein] + ATP = O-phospho-L-seryl-[protein] + ADP + H(+). The catalysed reaction is L-threonyl-[protein] + ATP = O-phospho-L-threonyl-[protein] + ADP + H(+). Its activity is regulated as follows. Activated by RHOA binding. Inhibited by Y-27632. Its function is as follows. Protein kinase which is a key regulator of actin cytoskeleton and cell polarity. Involved in regulation of smooth muscle contraction, actin cytoskeleton organization, stress fiber and focal adhesion formation, neurite retraction, cell adhesion and motility via phosphorylation of ADD1, BRCA2, CNN1, EZR, DPYSL2, EP300, MSN, MYL9/MLC2, NPM1, RDX, PPP1R12A and VIM. Phosphorylates SORL1 and IRF4. Acts as a negative regulator of VEGF-induced angiogenic endothelial cell activation. Positively regulates the activation of p42/MAPK1-p44/MAPK3 and of p90RSK/RPS6KA1 during myogenic differentiation. Plays an important role in the timely initiation of centrosome duplication. Inhibits keratinocyte terminal differentiation. May regulate closure of the eyelids and ventral body wall through organization of actomyosin bundles. Plays a critical role in the regulation of spine and synaptic properties in the hippocampus. Plays an important role in generating the circadian rhythm of the aortic myofilament Ca(2+) sensitivity and vascular contractility by modulating the myosin light chain phosphorylation. In Bos taurus (Bovine), this protein is Rho-associated protein kinase 2 (ROCK2).